We begin with the raw amino-acid sequence, 358 residues long: 3-isopropylmalate dehydrogenase (358 aa).

Position 79-92 (79-92 (GPKWEHLPPDEQPE)) interacts with NAD(+). Positions 100, 110, 139, and 227 each coordinate substrate. Mg(2+)-binding residues include D227, D251, and D255. 285–297 (GSAPDIAGKGVAN) contributes to the NAD(+) binding site.

This sequence belongs to the isocitrate and isopropylmalate dehydrogenases family. LeuB type 1 subfamily. As to quaternary structure, homodimer. It depends on Mg(2+) as a cofactor. Requires Mn(2+) as cofactor.

The protein localises to the cytoplasm. It catalyses the reaction (2R,3S)-3-isopropylmalate + NAD(+) = 4-methyl-2-oxopentanoate + CO2 + NADH. It participates in amino-acid biosynthesis; L-leucine biosynthesis; L-leucine from 3-methyl-2-oxobutanoate: step 3/4. In terms of biological role, catalyzes the oxidation of 3-carboxy-2-hydroxy-4-methylpentanoate (3-isopropylmalate) to 3-carboxy-4-methyl-2-oxopentanoate. The product decarboxylates to 4-methyl-2 oxopentanoate. In Pseudoalteromonas translucida (strain TAC 125), this protein is 3-isopropylmalate dehydrogenase.